A 155-amino-acid polypeptide reads, in one-letter code: Small ribosomal subunit protein uS9 (155 aa).

It belongs to the universal ribosomal protein uS9 family.

The polypeptide is Small ribosomal subunit protein uS9 (Sinorhizobium medicae (strain WSM419) (Ensifer medicae)).